Consider the following 429-residue polypeptide: Glutamyl-tRNA reductase (429 aa).

Substrate contacts are provided by residues 49 to 52, serine 107, 112 to 114, and glutamine 118; these read TCNR and EPQ. Cysteine 50 (nucleophile) is an active-site residue. An NADP(+)-binding site is contributed by 187–192; the sequence is GAGETI.

It belongs to the glutamyl-tRNA reductase family. In terms of assembly, homodimer.

It carries out the reaction (S)-4-amino-5-oxopentanoate + tRNA(Glu) + NADP(+) = L-glutamyl-tRNA(Glu) + NADPH + H(+). The protein operates within porphyrin-containing compound metabolism; protoporphyrin-IX biosynthesis; 5-aminolevulinate from L-glutamyl-tRNA(Glu): step 1/2. Catalyzes the NADPH-dependent reduction of glutamyl-tRNA(Glu) to glutamate 1-semialdehyde (GSA). The chain is Glutamyl-tRNA reductase from Pseudomonas fluorescens (strain SBW25).